The following is a 366-amino-acid chain: tRNA(Met) cytidine acetate ligase (366 aa).

Residues 7-20, G96, N152, and R175 each bind ATP; that span reads IAEF…HQYL.

It belongs to the TmcAL family.

The protein resides in the cytoplasm. The catalysed reaction is cytidine(34) in elongator tRNA(Met) + acetate + ATP = N(4)-acetylcytidine(34) in elongator tRNA(Met) + AMP + diphosphate. In terms of biological role, catalyzes the formation of N(4)-acetylcytidine (ac(4)C) at the wobble position of elongator tRNA(Met), using acetate and ATP as substrates. First activates an acetate ion to form acetyladenylate (Ac-AMP) and then transfers the acetyl group to tRNA to form ac(4)C34. The sequence is that of tRNA(Met) cytidine acetate ligase from Streptococcus equi subsp. zooepidemicus (strain MGCS10565).